The following is an 84-amino-acid chain: Toluene-4-monooxygenase system, hydroxylase component subunit gamma (84 aa).

It belongs to the TmoB/XamoB family. In terms of assembly, the alkene monooxygenase multicomponent enzyme system is composed of an electron transfer component and a monooxygenase component interacting with the effector protein TmoD. The electron transfer component is composed of a ferredoxin reductase (TmoF) and a ferredoxin (TmoC), and the monooxygenase component is formed by a heterohexamer (dimer of heterotrimers) of two alpha subunits (TmoA), two beta subunits (TmoE) and two gamma subunits (TmoB).

It catalyses the reaction toluene + NADH + O2 + H(+) = 4-methylphenol + NAD(+) + H2O. It functions in the pathway xenobiotic degradation; toluene degradation. Inhibited by Zn(2+) and Cu(2+). Its function is as follows. Component of the toluene-4-monooxygenase multicomponent enzyme system which catalyzes the O2- and NADH-dependent hydroxylation of toluene to form p-cresol. Also able to convert benzene to phenol, catechol, and 1,2,3-trihydroxybenzene by successive hydroxylations. The chain is Toluene-4-monooxygenase system, hydroxylase component subunit gamma from Ectopseudomonas mendocina (Pseudomonas mendocina).